We begin with the raw amino-acid sequence, 287 residues long: Bifunctional protein FolD (287 aa).

Residues 165 to 167 (NRS), S190, and I233 each bind NADP(+).

It belongs to the tetrahydrofolate dehydrogenase/cyclohydrolase family. As to quaternary structure, homodimer.

It carries out the reaction (6R)-5,10-methylene-5,6,7,8-tetrahydrofolate + NADP(+) = (6R)-5,10-methenyltetrahydrofolate + NADPH. The enzyme catalyses (6R)-5,10-methenyltetrahydrofolate + H2O = (6R)-10-formyltetrahydrofolate + H(+). It participates in one-carbon metabolism; tetrahydrofolate interconversion. Its function is as follows. Catalyzes the oxidation of 5,10-methylenetetrahydrofolate to 5,10-methenyltetrahydrofolate and then the hydrolysis of 5,10-methenyltetrahydrofolate to 10-formyltetrahydrofolate. The protein is Bifunctional protein FolD of Nitrosopumilus maritimus (strain SCM1).